The chain runs to 276 residues: Undecaprenyl-diphosphatase (276 aa).

8 consecutive transmembrane segments (helical) span residues 1–21 (MSWL…FLPV), 39–59 (AGAS…LVYF), 84–104 (YWLG…GLLF), 115–135 (LWLV…AEYA), 159–179 (LALV…LFLG), 190–210 (FLLA…DAFA), 222–242 (QLLV…AWFL), and 253–273 (FVGY…TGVV).

It belongs to the UppP family.

The protein resides in the cell membrane. The enzyme catalyses di-trans,octa-cis-undecaprenyl diphosphate + H2O = di-trans,octa-cis-undecaprenyl phosphate + phosphate + H(+). Functionally, catalyzes the dephosphorylation of undecaprenyl diphosphate (UPP). Confers resistance to bacitracin. This chain is Undecaprenyl-diphosphatase, found in Mycolicibacterium gilvum (strain PYR-GCK) (Mycobacterium gilvum (strain PYR-GCK)).